Reading from the N-terminus, the 377-residue chain is Succinyl-diaminopimelate desuccinylase (377 aa).

His75 is a binding site for Zn(2+). The active site involves Asp77. Asp106 is a binding site for Zn(2+). Glu136 functions as the Proton acceptor in the catalytic mechanism. 3 residues coordinate Zn(2+): Glu137, Glu165, and His350.

Belongs to the peptidase M20A family. DapE subfamily. As to quaternary structure, homodimer. Zn(2+) serves as cofactor. The cofactor is Co(2+).

It catalyses the reaction N-succinyl-(2S,6S)-2,6-diaminopimelate + H2O = (2S,6S)-2,6-diaminopimelate + succinate. The protein operates within amino-acid biosynthesis; L-lysine biosynthesis via DAP pathway; LL-2,6-diaminopimelate from (S)-tetrahydrodipicolinate (succinylase route): step 3/3. Its function is as follows. Catalyzes the hydrolysis of N-succinyl-L,L-diaminopimelic acid (SDAP), forming succinate and LL-2,6-diaminopimelate (DAP), an intermediate involved in the bacterial biosynthesis of lysine and meso-diaminopimelic acid, an essential component of bacterial cell walls. This Sphingopyxis alaskensis (strain DSM 13593 / LMG 18877 / RB2256) (Sphingomonas alaskensis) protein is Succinyl-diaminopimelate desuccinylase.